The chain runs to 452 residues: MAAAALRGGWCRCPRRCLGSGIQFLSSHNLPHGSSYQISRPGRELTLTKSYSSGSRKGFLSGLLDNIKQELAKNKEMKESIKKFRDEAKKLEESDALQEARRKYKSIESETVRTSEAIKKKLGELTGTVKESLDEVSKSDLGRKIKEGVEEAARTAKQSAESVSKSGEKLGKTAAFKAISQGVESVKKELDESVLGQTGPYRRPERLRKRTEFAGAKFKESKVFEANEEALGVVLHKDSKWYQQWKDFKDNNVVFNRFFEMKMKYDESDNVLIRASRALTDKVTDLLGGLFSKTEMSEVLTEILRVDPTFDKDHFLHQCETDIIPNILEAMISGELDILKDWCYEATYSQLAHPIQQAKALGFQFHSRILDISNVDLAMGKMMEQGPVLIVTFQAQVVMVIKNSKGEVYDGDPDKVQRMLYVWALCRDQEELNPYAAWRLLDISASSTEQIL.

Thr128 carries the post-translational modification Phosphothreonine. 166–173 (SGEKLGKT) serves as a coordination point for ATP. At Lys177 the chain carries N6-succinyllysine. The residue at position 180 (Ser180) is a Phosphoserine. The residue at position 217 (Lys217) is an N6-succinyllysine.

The protein belongs to the Tim44 family. As to quaternary structure, probable component of the PAM complex at least composed of a mitochondrial HSP70 protein, GRPEL1 or GRPEL2, TIMM44, TIMM16/PAM16 and TIMM14/DNAJC19. The complex interacts with the TIMM23 component of the TIM23 complex. Interacts with SLC25A4/ANT1 and SLC25A5/ANT2; leading to inhibit the presequence translocase TIMM23, thereby promoting stabilization of PINK1.

The protein localises to the mitochondrion inner membrane. In terms of biological role, essential component of the PAM complex, a complex required for the translocation of transit peptide-containing proteins from the inner membrane into the mitochondrial matrix in an ATP-dependent manner. Recruits mitochondrial HSP70 to drive protein translocation into the matrix using ATP as an energy source. This Mus musculus (Mouse) protein is Mitochondrial import inner membrane translocase subunit TIM44 (Timm44).